A 206-amino-acid polypeptide reads, in one-letter code: Holliday junction branch migration complex subunit RuvA (206 aa).

The interval 1–63 is domain I; it reads MISSLRGDVI…DDAHTLYAFS (63 aa). The tract at residues 64–142 is domain II; that stretch reads TSEQRETFGI…ALEATSGQAT (79 aa). Residues 143–150 are flexible linker; that stretch reads IGDIAATG. Residues 151–206 form a domain III region; it reads NDTALQSQVVEALVGLGFTEAKAATAVKKILEEQNGTTDPSSVLREALQRLSGQKR.

This sequence belongs to the RuvA family. As to quaternary structure, homotetramer. Forms an RuvA(8)-RuvB(12)-Holliday junction (HJ) complex. HJ DNA is sandwiched between 2 RuvA tetramers; dsDNA enters through RuvA and exits via RuvB. An RuvB hexamer assembles on each DNA strand where it exits the tetramer. Each RuvB hexamer is contacted by two RuvA subunits (via domain III) on 2 adjacent RuvB subunits; this complex drives branch migration. In the full resolvosome a probable DNA-RuvA(4)-RuvB(12)-RuvC(2) complex forms which resolves the HJ.

The protein resides in the cytoplasm. Functionally, the RuvA-RuvB-RuvC complex processes Holliday junction (HJ) DNA during genetic recombination and DNA repair, while the RuvA-RuvB complex plays an important role in the rescue of blocked DNA replication forks via replication fork reversal (RFR). RuvA specifically binds to HJ cruciform DNA, conferring on it an open structure. The RuvB hexamer acts as an ATP-dependent pump, pulling dsDNA into and through the RuvAB complex. HJ branch migration allows RuvC to scan DNA until it finds its consensus sequence, where it cleaves and resolves the cruciform DNA. The sequence is that of Holliday junction branch migration complex subunit RuvA from Corynebacterium urealyticum (strain ATCC 43042 / DSM 7109).